A 387-amino-acid polypeptide reads, in one-letter code: Erythronate-4-phosphate dehydrogenase (387 aa).

Residues serine 45 and threonine 67 each coordinate substrate. Aspartate 147 contacts NAD(+). Arginine 208 is a catalytic residue. Aspartate 232 contacts NAD(+). Glutamate 237 is an active-site residue. Histidine 254 serves as the catalytic Proton donor. Glycine 257 contributes to the NAD(+) binding site. Tyrosine 258 provides a ligand contact to substrate.

It belongs to the D-isomer specific 2-hydroxyacid dehydrogenase family. PdxB subfamily. Homodimer.

It is found in the cytoplasm. It catalyses the reaction 4-phospho-D-erythronate + NAD(+) = (R)-3-hydroxy-2-oxo-4-phosphooxybutanoate + NADH + H(+). Its pathway is cofactor biosynthesis; pyridoxine 5'-phosphate biosynthesis; pyridoxine 5'-phosphate from D-erythrose 4-phosphate: step 2/5. In terms of biological role, catalyzes the oxidation of erythronate-4-phosphate to 3-hydroxy-2-oxo-4-phosphonooxybutanoate. The polypeptide is Erythronate-4-phosphate dehydrogenase (Shewanella woodyi (strain ATCC 51908 / MS32)).